We begin with the raw amino-acid sequence, 318 residues long: Formimidoylglutamase (318 aa).

Mn(2+) is bound by residues H130, D155, H157, D159, D246, and D248.

This sequence belongs to the arginase family. Mn(2+) is required as a cofactor.

It catalyses the reaction N-formimidoyl-L-glutamate + H2O = formamide + L-glutamate. It participates in amino-acid degradation; L-histidine degradation into L-glutamate; L-glutamate from N-formimidoyl-L-glutamate (hydrolase route): step 1/1. Functionally, catalyzes the conversion of N-formimidoyl-L-glutamate to L-glutamate and formamide. The protein is Formimidoylglutamase of Klebsiella pneumoniae (strain 342).